Here is a 348-residue protein sequence, read N- to C-terminus: MQHIVDVLVIGASQAGLAMGYYLKQNNILFAIVGKENRIGDVWRNRYDSLVLFTPRWFSSLPGMALKGDPNGYPTKDEIADYLEDYAQKFELPIHLNTEVISLQKEDEIFKVTTNNGNYVAEKVVVATGPFQKPYIPPFAESLSDKVYQVHTSRYLNPSQLQEGSVLVVGAGNSGAQIAVELSEDREVYLSVGHKMKFFPLEIMGKSIFWWFKKLGLLNVHINSSLGQFISKQSDPIFGKELKHLIQEGKIKIKPRTESILGDVISFADNSQIQVQNVIWATGFYSDYSWIQIPNVLDHRGKPIHQRGVTSVKGLYFLGLPWQYRRGSALIGGVGADAEYLINDILNH.

This is an uncharacterized protein from Geobacillus kaustophilus (strain HTA426).